The sequence spans 501 residues: TNF receptor-associated factor 2 (501 aa).

At Ala-2 the chain carries N-acetylalanine. Ser-5 carries the post-translational modification Phosphoserine. Thr-7 carries the post-translational modification Phosphothreonine. A Phosphoserine modification is found at Ser-11. Thr-22 bears the Phosphothreonine mark. Lys-31 participates in a covalent cross-link: Glycyl lysine isopeptide (Lys-Gly) (interchain with G-Cter in ubiquitin). The RING-type zinc-finger motif lies at 34–73 (CSACRNVLRRPFQAQCGHRYCSFCLASILSSGPQNCAACV). Thr-117 bears the Phosphothreonine; by PKC mark. TRAF-type zinc fingers lie at residues 124–180 (CHEG…AHHE) and 177–233 (AHHE…EKQQ). The segment at 283–293 (ENIVCVLNREV) is important for interaction with BIRC2 and BIRC3. Residues 299–348 (TAEACSRQHRLDQDKIEALSSKVQQLERSIGLKDLAMADLEQKVLEMEAS) adopt a coiled-coil conformation. Lys-320 participates in a covalent cross-link: Glycyl lysine isopeptide (Lys-Gly) (interchain with G-Cter in ubiquitin). In terms of domain architecture, MATH spans 351–496 (DGVFIWKISD…DDAIFIKAIV (146 aa)).

The protein belongs to the TNF receptor-associated factor family. A subfamily. As to quaternary structure, homotrimer. Heterotrimer with TRAF1. Heterotrimer with TRAF3 (via TRAF domain). The domain containing the RING-type and the first TRAF-type zinc finger can also form homodimers (in vitro). Interacts with TNFRSF1B/TNFR2. Interacts with TNFRSF5/CD40. Interacts with TNFRSF4, TNFRSF7/CD27, TNFRSF8/CD30, TNFRSF9/CD137, TNFRSF11A/RANK, TNFRSF13B/TACI, TNFRSF14, TNFRSF16/NGFR, TNFRSF17/BCMA, TNFRSF18/AITR, TNFRSF19/TROY, TNFRSF19L/RELT and EDAR. Stimulation of TNF-alpha receptor TNFRSF1A leads to the formation of two distinct signaling complexes. Plasma membrane-bound complex I is composed of TNFRSF1A, TRADD, RIPK1, TRAF2 and BIRC2/c-IAP1 or BIRC3 which interacts with CHUCK/IKK-alpha, IKBKB/IKK-beta and IKBKG/IKK-gamma promoting cell survival. Subsequently, TRADD, RIPK1 and TRAF2 dissociate from TNFRSF1A and form cytoplasmic complex II with FADD and caspase CASP8 promoting cell apoptosis. Interacts with TRADD. Identified in a complex with TNFRSF1A, RIPK1 and IKBKB/IKK-beta. Interacts with RIPK2. Interacts with BIRC2 and BIRC3 N-terminus; a single BIRC2 or BIRC3 molecule interacts with a heterotrimer formed by TRAF1 and TRAF2, or a TRAF2 homotrimer. Identified in a complex composed of TRAF2, TRAF3, BIRC2 and BIRC3. Interacts with BIRC2; the interaction promotes BIRC2 stability. Interaction with BIRC2 and/or BIRC3 is essential for ubiquitination of IKBKE, degradation of NFKBIA and activation of NF-kappa-B. Within complex I, phosphorylated TRAF2 interacts (via 'Lys-63'-linked polyubiquitin chains) with CHUCK/IKK-alpha, IKBKB/IKK-beta, IKBKG/IKK-gamma TAB2, TAB3 and TAK1 in response to TNF-alpha stimulation. Within complex I, interacts with UXT isoform 1 (via TPQE motif); the interaction prevents the recruitment of FADD and CASP8/caspase 8 to complex I. Forms a complex composed of TNFRSF8/CD30 or TNFRSF1B/TNFR2, and TRAF1, TRAF2 and E3 ligase TRAIP. Within the complex, interacts with TRAIP; the interaction inhibits TRAF2-mediated NF-kappa B activation. Component of a complex composed of TANK and TBK1. Interacts with TRPC4AP. Interacts with MAP3K1/MEKK1, MAP3K5/ASK1 and MAP3K11/MLK3 in response to TNF-alpha stimulation; the interaction leads to JNK activation and interaction with MAP3K5 is inhibited by PRMT1. Component of a complex composed of MAP3K14/NIK BIRC3 and TRAF3; the interaction leads to BIRC2/3-mediated ubiquitination of TRAF3 upon CD40 engagement in a TRAF2-dependent manner. Interacts with MAP3K14/NIK in response to TNF-alpha stimulation; the interaction leads to NF-kappa B activation. Interacts with PEG3; the interaction may promote TRAF2-mediated NF-kappa B activation. Interacts with HIVEP3; the interaction may inhibit TNF-alpha-TRAF2-mediated NF-kappa B and JNK activation. Interacts with TANK/ITRAF; the interaction prevents interaction between TNFRSF1B/TNFR2 and TRAF2. Interacts with deubiquitinating enzyme CYLD; the interaction results in the deubiquitination and inactivation of TRAF2. Interacts with SIAH2; the interaction leads to TRAF2 ubiquitination and degradation. Interacts with E2 conjugating enzyme UBE2N/Ubc13, E3 ligase ITCH and RNF11 in response to TNF-alpha stimulation. Interacts with ubiquitin-editing enzyme TNFAIP3/A20 in response to TNF-alpha stimulation; the interaction promotes TRAF2 dissociation from UBE2N/Ubc13, ITCH, RNF11 and TAX1BP1 and prevents prolonged TRAF-2 ubiquitination. Interacts with TAX1BP1 in response to TNF-alpha stimulation; the interaction promotes TRAF2 dissociation from UBE2N/Ubc13 and TNFAIP3/A20, and prevents prolonged TRAF-2 ubiquitination. Interacts (via C-terminus) with EIF2AK2/PKR (via the kinase catalytic domain). Interacts with deubiquitinating enzyme USP48. Interacts with PTPN2; probably involved in TNF-mediated signaling. Interacts with Toll-like receptor TLR4/3 adapter TICAM1/TRIF; the interaction may promote TICAM1 ubiquitination. Interacts with kinase/endoribonuclease ERN1/IRE1 and DAB2IP in response to ER stress; the interaction requires DAB2IP. Interacts with ERN1/IRE1 and TAOK3 in response to ER stress; the interaction may promote TRAF2 phosphorylation. Interacts (via zinc fingers) with DAB2IP (via C-terminus PER domain)in response to TNF-alpha stimulation. Interacts with CASP8AP2/FLASH. Interacts with NFATC2IP; the interaction may repress IL-4 production in T cells. Interacts with kinase CDK9. Interacts with sphingosine kinase 1 SPHK1. Interacts with kinase TNIK. Interacts with TRAFD1. Interacts with DNA phosphodiesterase TDP2. Interacts with MAVS/IPS1. Interacts with CARD14. Interacts with Epstein-Barr virus LMP1/BNFL1. Interacts with GPS2. Interacts with XPNPEP3. Interacts with RIPK3. Interacts with RELL2. Interacts with LRRC19. Interacts with GAPDH; promoting TRAF2 ubiquitination. In terms of processing, phosphorylated at several serine residues within the first 128 amino acid residues. Phosphorylated at Thr-117 in response to signaling via TNF and TNFRSF1A. Phosphorylation at Thr-117 is required for 'Lys-63'-linked polyubiquitination, but not for 'Lys-48'-linked polyubiquitination. Phosphorylation at Thr-117 is important for interaction with IKKA and IKKB, activation of IKK and subsequent activation of NF-kappa-B. Post-translationally, undergoes both 'Lys-48'-linked and 'Lys-63'-linked polyubiquitination. Polyubiquitinated via 'Lys-63'-linked ubiquitin in response to TNF signaling; this requires prior phosphorylation at Thr-117. 'Lys-63'-linked polyubiquitination promotes TRAF2-mediated activation of NF-kappa-B. Can be polyubiquitinated at several Lys residues via 'Lys-48'-linked ubiquitin chains in response to TNF signaling, leading to proteasomal degradation. Autoubiquitinated, leading to its subsequent proteasomal degradation. Polyubiquitinated by BIRC2 and SIAH2, leading to its subsequent proteasomal degradation. Deubiquitinated by CYLD, a protease that specifically cleaves 'Lys-63'-linked polyubiquitin chains. Ubiquination is inhibited by LRRC19; inhibits proteasomal degradation. Ubiquitinated at Lys-320 by the SCF(FBXL2) complex, leading to its degradation by the proteasome. Ubiquitinated by E3 ubiquitin-protein ligase complex containing FBXO7; leading to repression of NF-kappa-B signaling.

It is found in the cytoplasm. It catalyses the reaction S-ubiquitinyl-[E2 ubiquitin-conjugating enzyme]-L-cysteine + [acceptor protein]-L-lysine = [E2 ubiquitin-conjugating enzyme]-L-cysteine + N(6)-ubiquitinyl-[acceptor protein]-L-lysine.. The protein operates within protein modification; protein ubiquitination. With respect to regulation, has very low E3 ubiquitin ligase activity in the absence of sphingosine-1-phosphate. E3 ubiquitin ligase activity is strongly activated by cytoplasmic sphingosine-1-phosphate. Its function is as follows. E3 ubiquitin-protein ligase that regulates activation of NF-kappa-B and JNK and plays a central role in the regulation of cell survival and apoptosis. Catalyzes 'Lys-63'-linked ubiquitination of target proteins, such as BIRC3, IKBKE, MLST8, RIPK1 and TICAM1. Is an essential constituent of several E3 ubiquitin-protein ligase complexes, where it promotes the ubiquitination of target proteins by bringing them into contact with other E3 ubiquitin ligases. Regulates BIRC2 and BIRC3 protein levels by inhibiting their autoubiquitination and subsequent degradation; this does not depend on the TRAF2 RING-type zinc finger domain. Plays a role in mediating activation of NF-kappa-B by EIF2AK2/PKR. In complex with BIRC2 or BIRC3, promotes ubiquitination of IKBKE. Acts as a regulator of mTORC1 and mTORC2 assembly by mediating 'Lys-63'-linked ubiquitination of MLST8, thereby inhibiting formation of the mTORC2 complex, while facilitating assembly of the mTORC1 complex. Required for normal antibody isotype switching from IgM to IgG. This chain is TNF receptor-associated factor 2, found in Homo sapiens (Human).